Here is a 678-residue protein sequence, read N- to C-terminus: uncharacterized protein (678 aa).

Helical transmembrane passes span F228 to L250, L263 to Q285, S300 to V322, M334 to F356, F361 to A380, R387 to L405, N420 to F439, and N455 to L477. The interval P653–E678 is disordered.

It localises to the cell membrane. This is an uncharacterized protein from Treponema pallidum (strain Nichols).